Consider the following 432-residue polypeptide: Peptidase B (432 aa).

Mn(2+) contacts are provided by lysine 196 and aspartate 201. Lysine 208 is an active-site residue. Mn(2+) is bound by residues aspartate 219, aspartate 278, and glutamate 280. Residue arginine 282 is part of the active site.

Belongs to the peptidase M17 family. In terms of assembly, homohexamer. The cofactor is Mn(2+).

Its subcellular location is the cytoplasm. It catalyses the reaction Release of an N-terminal amino acid, Xaa, from a peptide or arylamide. Xaa is preferably Glu or Asp but may be other amino acids, including Leu, Met, His, Cys and Gln.. Probably plays an important role in intracellular peptide degradation. This Vibrio vulnificus (strain CMCP6) protein is Peptidase B.